A 227-amino-acid chain; its full sequence is MTNNLSGYRNKFVRVKTSKKRTVSSSNWLRRQLNDPYVAKARLEGFRSRAAYKLLEIHGKFKLFNPNMKIVDLGAAPGGWSQVASKLIKASDNSLNNKIISIDLLEIEPIAEVEFFQKDFFEENTEELIIQALDGKADIVMSDMASNTIGHKATDHIRTLLLCEQAFEFALKVLKPSGHFIAKIFRGGAENELLNKVKREFRTVKHFKPSSSRSESTEIYLVALNKK.

5 residues coordinate S-adenosyl-L-methionine: G78, W80, D103, D119, and D143. Catalysis depends on K183, which acts as the Proton acceptor.

This sequence belongs to the class I-like SAM-binding methyltransferase superfamily. RNA methyltransferase RlmE family.

It is found in the cytoplasm. It catalyses the reaction uridine(2552) in 23S rRNA + S-adenosyl-L-methionine = 2'-O-methyluridine(2552) in 23S rRNA + S-adenosyl-L-homocysteine + H(+). In terms of biological role, specifically methylates the uridine in position 2552 of 23S rRNA at the 2'-O position of the ribose in the fully assembled 50S ribosomal subunit. The polypeptide is Ribosomal RNA large subunit methyltransferase E (Rickettsia felis (strain ATCC VR-1525 / URRWXCal2) (Rickettsia azadi)).